The primary structure comprises 346 residues: Nuclear distribution protein nudE-like 1 (346 aa).

Residues 13–190 are a coiled coil; the sequence is KEEIVYWREL…LAVRERQTNG (178 aa). Disordered regions lie at residues 184-205 and 325-346; these read RERQ…DCDK and YDPP…PLSV. The segment covering 188–200 has biased composition (polar residues); sequence TNGTRKSAPSSPT. Residues 335–346 are compositionally biased toward pro residues; that stretch reads PPSPPGMLPLSV.

It belongs to the nudE family. Phosphorylated in mitosis.

The protein resides in the cytoplasm. The protein localises to the cytoskeleton. Its subcellular location is the microtubule organizing center. It localises to the centrosome. It is found in the spindle. In terms of biological role, required for organization of the cellular microtubule array and microtubule anchoring at the centrosome. Positively regulates the activity of the minus-end directed microtubule motor protein dynein. May enhance dynein-mediated microtubule sliding by targeting dynein to the microtubule plus end. Positively regulates lysosome peripheral distribution and ruffled border formation in osteoclasts. This chain is Nuclear distribution protein nudE-like 1 (ndel1), found in Xenopus tropicalis (Western clawed frog).